Consider the following 208-residue polypeptide: MERLLVLARHGQSEWNLKNLFTGWRDPDLTEVGIAEARAAGRRLKAKGIRFDICFTSALTRAQRTAALILEELGQPDLPTIADEALNERDYGDLSGLNKDDARARWGKDQVHIWRRSYDVPPPGGESLKDTVARVLPYTMREILPRVMRGERVLVAAHGNSLRALVMVLDGLTTETIPGLELWTGVPLVYRLKADTTVESKEVLDKDA.

Substrate contacts are provided by residues 9–16 (RHGQSEWN), 22–23 (TG), Arg-61, 88–91 (ERDY), Lys-99, 115–116 (RR), and 159–160 (GN). His-10 acts as the Tele-phosphohistidine intermediate in catalysis. Glu-88 acts as the Proton donor/acceptor in catalysis.

This sequence belongs to the phosphoglycerate mutase family. BPG-dependent PGAM subfamily. As to quaternary structure, homodimer.

The enzyme catalyses (2R)-2-phosphoglycerate = (2R)-3-phosphoglycerate. It functions in the pathway carbohydrate degradation; glycolysis; pyruvate from D-glyceraldehyde 3-phosphate: step 3/5. In terms of biological role, catalyzes the interconversion of 2-phosphoglycerate and 3-phosphoglycerate. In Methylobacterium sp. (strain 4-46), this protein is 2,3-bisphosphoglycerate-dependent phosphoglycerate mutase.